Consider the following 515-residue polypeptide: Ribonuclease Y (515 aa).

Residues 6-26 traverse the membrane as a helical segment; it reads LTSFVIITLSLAVGLTGGYYG. The region spanning 205–290 is the KH domain; sequence TVSVVPLPND…EMVEKARKEI (86 aa). Residues 331–424 enclose the HD domain; sequence VLRHSVEVAH…VQAADAISAS (94 aa).

This sequence belongs to the RNase Y family.

It localises to the cell membrane. Endoribonuclease that initiates mRNA decay. This chain is Ribonuclease Y, found in Syntrophomonas wolfei subsp. wolfei (strain DSM 2245B / Goettingen).